Reading from the N-terminus, the 401-residue chain is 8-amino-7-oxononanoate synthase (401 aa).

A substrate-binding site is contributed by arginine 24. Residue 111–112 (GF) participates in pyridoxal 5'-phosphate binding. Histidine 137 contacts substrate. Positions 183, 211, and 240 each coordinate pyridoxal 5'-phosphate. The residue at position 243 (lysine 243) is an N6-(pyridoxal phosphate)lysine. Threonine 357 provides a ligand contact to substrate.

Belongs to the class-II pyridoxal-phosphate-dependent aminotransferase family. BioF subfamily. Homodimer. Pyridoxal 5'-phosphate is required as a cofactor.

The enzyme catalyses 6-carboxyhexanoyl-[ACP] + L-alanine + H(+) = (8S)-8-amino-7-oxononanoate + holo-[ACP] + CO2. Its pathway is cofactor biosynthesis; biotin biosynthesis. In terms of biological role, catalyzes the decarboxylative condensation of pimeloyl-[acyl-carrier protein] and L-alanine to produce 8-amino-7-oxononanoate (AON), [acyl-carrier protein], and carbon dioxide. The sequence is that of 8-amino-7-oxononanoate synthase from Xanthomonas oryzae pv. oryzae (strain MAFF 311018).